Here is a 244-residue protein sequence, read N- to C-terminus: Flavin-dependent thymidylate synthase (244 aa).

Positions 2–207 (VRVTLVNYTR…ELRPIIKWAK (206 aa)) constitute a ThyX domain. Residues Ser56, 80-82 (RHR), and Gln88 each bind FAD. DUMP is bound by residues 77-80 (QLVR), 88-92 (QQSQR), and Arg146. Residues 80–90 (RHRIASYTQQS) carry the ThyX motif motif. Residues 162–164 (NLR) and His168 each bind FAD. Arg173 serves as a coordination point for dUMP. Arg173 functions as the Involved in ionization of N3 of dUMP, leading to its activation in the catalytic mechanism.

This sequence belongs to the thymidylate synthase ThyX family. In terms of assembly, homotetramer. FAD serves as cofactor.

The catalysed reaction is dUMP + (6R)-5,10-methylene-5,6,7,8-tetrahydrofolate + NADPH + H(+) = dTMP + (6S)-5,6,7,8-tetrahydrofolate + NADP(+). It functions in the pathway pyrimidine metabolism; dTTP biosynthesis. In terms of biological role, catalyzes the reductive methylation of 2'-deoxyuridine-5'-monophosphate (dUMP) to 2'-deoxythymidine-5'-monophosphate (dTMP) while utilizing 5,10-methylenetetrahydrofolate (mTHF) as the methyl donor, and NADPH and FADH(2) as the reductant. The sequence is that of Flavin-dependent thymidylate synthase from Pyrococcus abyssi (strain GE5 / Orsay).